A 265-amino-acid chain; its full sequence is Phosphatidylglycerol--prolipoprotein diacylglyceryl transferase (265 aa).

7 helical membrane passes run 11-31 (AVSIGPLQFRWYGLMYLFGFI), 56-76 (MVTWAIFGVVLGGRLGYILFY), 91-111 (IWHGGMSFHGGLLGVLFAVWL), 120-140 (FLSVVDFVAPLIPPGLFFGRI), 173-193 (QLYEAVLEGVVLFAAVWWFSG), 198-218 (VGAVSGLFGVLYAIFRFAVEF), and 233-253 (WLTMGQVLCLPLFGVGMWLLL). A 1,2-diacyl-sn-glycero-3-phospho-(1'-sn-glycerol) is bound at residue Arg-139.

The protein belongs to the Lgt family.

The protein resides in the cell inner membrane. The enzyme catalyses L-cysteinyl-[prolipoprotein] + a 1,2-diacyl-sn-glycero-3-phospho-(1'-sn-glycerol) = an S-1,2-diacyl-sn-glyceryl-L-cysteinyl-[prolipoprotein] + sn-glycerol 1-phosphate + H(+). Its pathway is protein modification; lipoprotein biosynthesis (diacylglyceryl transfer). Functionally, catalyzes the transfer of the diacylglyceryl group from phosphatidylglycerol to the sulfhydryl group of the N-terminal cysteine of a prolipoprotein, the first step in the formation of mature lipoproteins. This chain is Phosphatidylglycerol--prolipoprotein diacylglyceryl transferase, found in Nitratidesulfovibrio vulgaris (strain DSM 19637 / Miyazaki F) (Desulfovibrio vulgaris).